The chain runs to 593 residues: MTSRRWFHPNITGVEAENLLLTRGVDGSFLARPSKSNPGDFTLSVRRTGAVTHIKIQNTGDYYDLYGGEKFATLAELVQYYMEHHGQLKEKNGDVIELKYPLNCADPTSERWFHGHLSGREAEKLLTEKGKHGSFLVRESQSHPGDFVLSVRTGDDKGESNDGKSKVTHVMIHCQDLKYDVGGGEKFDSLTDLVEHYKKNPMVETLGTVLQLKQPLNTTRINAAEIESRVRELSKLAETTDKVKQGFWEEFETLQQQECKLLYSRKEGQRQENKNKNRYKNILPFDHTRVVLHDGDPNEPVSDYINANIIMPEFETKCNNSKPKKSYIATQGCLQNTVNDFWRMVFQENSRVIVMTTKEVERGKSKCVKYWPDEYSLKEYGVMRVRNVKESAAHDYTLRELKLSKVGQGNTERTVWQYHFRTWPDHGVPSDPGGVLDFLEEVHHKQESISDAGPVVVHCSAGIGRTGTFIVIDILIDIIREKGVDCDIDVPKTIQMVRSQRSGMVQTEAQYRFIYMAVQHYIETLQRRIEEEQKSKRKGHEYTNIKYSLSDQTSGDQSPLPPCTPTPTCPEMREDSARVYENVGLMQQQKSFR.

SH2 domains follow at residues 6 to 102 (WFHP…KYPL) and 112 to 216 (WFHG…KQPL). The 275-residue stretch at 247-521 (FWEEFETLQQ…RFIYMAVQHY (275 aa)) folds into the Tyrosine-protein phosphatase domain. Substrate contacts are provided by residues Asp425, 459–465 (CSAGIGR), and Gln506. Catalysis depends on Cys459, which acts as the Phosphocysteine intermediate. Polar residues predominate over residues 548 to 557 (SLSDQTSGDQ). Positions 548-575 (SLSDQTSGDQSPLPPCTPTPTCPEMRED) are disordered. Residues 559–568 (PLPPCTPTPT) are compositionally biased toward pro residues.

This sequence belongs to the protein-tyrosine phosphatase family. Non-receptor class 2 subfamily. In terms of processing, phosphorylated by tyrosine-protein kinases. Expressed in embryonic fibroblast, hematopoietic, erythroid, myeloid and lymphoid cells.

It localises to the cytoplasm. It carries out the reaction O-phospho-L-tyrosyl-[protein] + H2O = L-tyrosyl-[protein] + phosphate. Functionally, this PTPase activity may directly link growth factor receptors and other signaling proteins through protein-tyrosine phosphorylation. The SH2 regions may interact with other cellular components to modulate its own phosphatase activity against interacting substrates. May play a positive role during the stages of erythroid cell proliferation. This chain is Tyrosine-protein phosphatase non-receptor type 11 (PTPN11), found in Gallus gallus (Chicken).